We begin with the raw amino-acid sequence, 125 residues long: Photoactive yellow protein (125 aa).

One can recognise a PAS domain in the interval 23-86 (LNQLAFGAIQ…GRFKEGVANG (64 aa)). S-(4-hydroxycinnamyl)cysteine is present on Cys69.

This sequence belongs to the photoactive yellow protein family. Post-translationally, the 4-hydroxycinnamic acid (p-coumaric acid) chromophore is covalently bound via a thioester linkage.

Functionally, photoactive blue light protein. Probably functions as a photoreceptor for a negative phototaxis response. The sequence is that of Photoactive yellow protein (pyp) from Halochromatium salexigens (Chromatium salexigens).